Reading from the N-terminus, the 411-residue chain is Arginine deiminase (411 aa).

Catalysis depends on Cys401, which acts as the Amidino-cysteine intermediate.

This sequence belongs to the arginine deiminase family.

It is found in the cytoplasm. It carries out the reaction L-arginine + H2O = L-citrulline + NH4(+). It functions in the pathway amino-acid degradation; L-arginine degradation via ADI pathway; carbamoyl phosphate from L-arginine: step 1/2. This Streptococcus pyogenes serotype M2 (strain MGAS10270) protein is Arginine deiminase.